We begin with the raw amino-acid sequence, 115 residues long: UPF0597 protein HI_0855 (115 aa).

Belongs to the UPF0597 family.

In Haemophilus influenzae (strain ATCC 51907 / DSM 11121 / KW20 / Rd), this protein is UPF0597 protein HI_0855.